Reading from the N-terminus, the 193-residue chain is MVATGSLSSKNPASISELLDCGYHPESLLSDFDYWDYVVPEPNLNEVIFEESTCQNLVKMLENCLSKSKQTKLGCSKVLVPEKLTQRIAQDVLRLSSTEPCGLRGCVMHVNLEIENVCKKLDRIVCDSSVVPTFELTLVFKQENCSWTSFRDFFFSRGRFSSGFRRTLILSSGFRLVKKKLYSLIGTTVIEGS.

This sequence belongs to the DDIT4 family. In terms of tissue distribution, up-regulated in atherosclerotic plaques relative to healthy segments of the same artery.

The protein resides in the cytoplasm. Inhibits cell growth by regulating the TOR signaling pathway upstream of the TSC1-TSC2 complex and downstream of AKT1. This Homo sapiens (Human) protein is DNA damage-inducible transcript 4-like protein (DDIT4L).